The following is a 271-amino-acid chain: Phosphatidylglycerol--prolipoprotein diacylglyceryl transferase (271 aa).

Transmembrane regions (helical) follow at residues 18-38 (IFGL…LVAL), 60-80 (YFIW…ILIY), 103-123 (FVGI…IATY), 137-157 (LDLV…GNFL), 181-201 (PSQL…LLLI), 209-229 (GELI…CEFF), and 236-256 (IGFV…MFLL). Arginine 152 lines the a 1,2-diacyl-sn-glycero-3-phospho-(1'-sn-glycerol) pocket.

The protein belongs to the Lgt family.

Its subcellular location is the cell inner membrane. The enzyme catalyses L-cysteinyl-[prolipoprotein] + a 1,2-diacyl-sn-glycero-3-phospho-(1'-sn-glycerol) = an S-1,2-diacyl-sn-glyceryl-L-cysteinyl-[prolipoprotein] + sn-glycerol 1-phosphate + H(+). The protein operates within protein modification; lipoprotein biosynthesis (diacylglyceryl transfer). Functionally, catalyzes the transfer of the diacylglyceryl group from phosphatidylglycerol to the sulfhydryl group of the N-terminal cysteine of a prolipoprotein, the first step in the formation of mature lipoproteins. In Campylobacter lari (strain RM2100 / D67 / ATCC BAA-1060), this protein is Phosphatidylglycerol--prolipoprotein diacylglyceryl transferase.